The chain runs to 431 residues: Asparagine--tRNA ligase 1 (431 aa).

Belongs to the class-II aminoacyl-tRNA synthetase family. As to quaternary structure, homodimer.

It is found in the cytoplasm. It catalyses the reaction tRNA(Asn) + L-asparagine + ATP = L-asparaginyl-tRNA(Asn) + AMP + diphosphate + H(+). The chain is Asparagine--tRNA ligase 1 (asnS1) from Lactiplantibacillus plantarum (strain ATCC BAA-793 / NCIMB 8826 / WCFS1) (Lactobacillus plantarum).